Here is a 493-residue protein sequence, read N- to C-terminus: Xylulose kinase (493 aa).

84 to 85 provides a ligand contact to substrate; that stretch reads QH. The active-site Proton acceptor is Asp247.

It belongs to the FGGY kinase family.

It carries out the reaction D-xylulose + ATP = D-xylulose 5-phosphate + ADP + H(+). Its function is as follows. Catalyzes the phosphorylation of D-xylulose to D-xylulose 5-phosphate. This chain is Xylulose kinase, found in Haemophilus influenzae (strain ATCC 51907 / DSM 11121 / KW20 / Rd).